A 513-amino-acid chain; its full sequence is Interferon-induced, double-stranded RNA-activated protein kinase (513 aa).

The residue at position 2 (Ala-2) is an N-acetylalanine. The region spanning 8-76 (FYVDKLNKYS…AKLAVEILDN (69 aa)) is the DRBM 1 domain. Lys-68 participates in a covalent cross-link: Glycyl lysine isopeptide (Lys-Gly) (interchain with G-Cter in ISG15). Ser-82 bears the Phosphoserine mark. Position 84 is a phosphothreonine (Thr-84). The 68-residue stretch at 95 to 162 (NYIGLVNSFA…AKNAYQKLSE (68 aa)) folds into the DRBM 2 domain. A Phosphotyrosine; by autocatalysis modification is found at Tyr-96. A Glycyl lysine isopeptide (Lys-Gly) (interchain with G-Cter in ISG15) cross-link involves residue Lys-154. A Phosphotyrosine; by autocatalysis modification is found at Tyr-157. Thr-227 is modified (phosphothreonine). An interaction with TRAF5 region spans residues 235-513 (DFEDIEEIGS…ISEKKKRNTC (279 aa)). Residues 236–502 (FEDIEEIGSG…EILKTLAEWK (267 aa)) form the Protein kinase domain. 242–250 (IGSGGFGQV) serves as a coordination point for ATP. A Phosphotyrosine; by autocatalysis modification is found at Tyr-262. ATP is bound at residue Lys-265. The active-site Proton acceptor is the Asp-373. Phosphothreonine; by autocatalysis occurs at positions 406 and 411. Ser-416 bears the Phosphoserine mark.

It belongs to the protein kinase superfamily. Ser/Thr protein kinase family. GCN2 subfamily. Homodimer. Interacts with DNAJC3. Interacts with STRBP. Forms a complex with FANCA, FANCC, FANCG and HSP70. Interacts with ADAR/ADAR1. The inactive form interacts with NCK1 and GSN. Interacts (via the kinase catalytic domain) with STAT3 (via SH2 domain), TRAF2 (C-terminus), TRAF5 (C-terminus) and TRAF6 (C-terminus). Interacts with MAP2K6, IKBKB/IKKB, IRS1, NPM1, TARBP2, NLRP1, NLRP3, NLRC4 and AIM2. Interacts (via DRBM 1 domain) with DUS2L (via DRBM domain). Interacts with DHX9 (via N-terminus) and this interaction is dependent upon activation of the kinase. Post-translationally, autophosphorylated on several Ser, Thr and Tyr residues. Autophosphorylation of Thr-411 is dependent on Thr-406 and is stimulated by dsRNA binding and dimerization. Autophosphorylation apparently leads to the activation of the kinase. Tyrosine autophosphorylation is essential for efficient dsRNA-binding, dimerization, and kinase activation.

Its subcellular location is the cytoplasm. It is found in the nucleus. The protein localises to the perinuclear region. The enzyme catalyses L-seryl-[protein] + ATP = O-phospho-L-seryl-[protein] + ADP + H(+). The catalysed reaction is L-threonyl-[protein] + ATP = O-phospho-L-threonyl-[protein] + ADP + H(+). It catalyses the reaction L-tyrosyl-[protein] + ATP = O-phospho-L-tyrosyl-[protein] + ADP + H(+). Initially produced in an inactive form and is activated by binding to viral dsRNA, which causes dimerization and autophosphorylation in the activation loop and stimulation of function. ISGylation can activate it in the absence of viral infection. Can also be activated by heparin, pro-inflammatory stimuli, growth factors, cytokines, oxidative stress and the cellular protein PRKRA. Activity is markedly stimulated by manganese ions. Activation is blocked by the cellular proteins TARBP2, DUS2L, NPM1, NCK1 and ADAR. Its function is as follows. IFN-induced dsRNA-dependent serine/threonine-protein kinase that phosphorylates the alpha subunit of eukaryotic translation initiation factor 2 (EIF2S1/eIF-2-alpha) and plays a key role in the innate immune response to viral infection. Inhibits viral replication via the integrated stress response (ISR): EIF2S1/eIF-2-alpha phosphorylation in response to viral infection converts EIF2S1/eIF-2-alpha in a global protein synthesis inhibitor, resulting to a shutdown of cellular and viral protein synthesis, while concomitantly initiating the preferential translation of ISR-specific mRNAs, such as the transcriptional activator ATF4. Exerts its antiviral activity on a wide range of DNA and RNA viruses. Also involved in the regulation of signal transduction, apoptosis, cell proliferation and differentiation: phosphorylates other substrates including p53/TP53, PPP2R5A, DHX9, ILF3 and IRS1. In addition to serine/threonine-protein kinase activity, also has tyrosine-protein kinase activity and phosphorylates CDK1 at 'Tyr-4' upon DNA damage, facilitating its ubiquitination and proteasomal degradation. Either as an adapter protein and/or via its kinase activity, can regulate various signaling pathways (p38 MAP kinase, NF-kappa-B and insulin signaling pathways) and transcription factors (JUN, STAT1, STAT3, IRF1, ATF3) involved in the expression of genes encoding pro-inflammatory cytokines and IFNs. Activates the NF-kappa-B pathway via interaction with IKBKB and TRAF family of proteins and activates the p38 MAP kinase pathway via interaction with MAP2K6. Can act as both a positive and negative regulator of the insulin signaling pathway (ISP). Negatively regulates ISP by inducing the inhibitory phosphorylation of insulin receptor substrate 1 (IRS1) at 'Ser-312' and positively regulates ISP via phosphorylation of PPP2R5A which activates FOXO1, which in turn up-regulates the expression of insulin receptor substrate 2 (IRS2). Can regulate NLRP3 inflammasome assembly and the activation of NLRP3, NLRP1, AIM2 and NLRC4 inflammasomes. Plays a role in the regulation of the cytoskeleton by binding to gelsolin (GSN), sequestering the protein in an inactive conformation away from actin. The polypeptide is Interferon-induced, double-stranded RNA-activated protein kinase (Eif2ak2) (Rattus norvegicus (Rat)).